A 658-amino-acid polypeptide reads, in one-letter code: Threonine--tRNA ligase (658 aa).

The 64-residue stretch at 1–64 folds into the TGS domain; sequence MSNTVSLQFP…GASGKVEIIT (64 aa). Residues 246–548 form a catalytic region; sequence DHRRLGREMD…LIENFAGHMP (303 aa). The Zn(2+) site is built by C343, H394, and H525.

The protein belongs to the class-II aminoacyl-tRNA synthetase family. Homodimer. Requires Zn(2+) as cofactor.

It is found in the cytoplasm. It catalyses the reaction tRNA(Thr) + L-threonine + ATP = L-threonyl-tRNA(Thr) + AMP + diphosphate + H(+). Catalyzes the attachment of threonine to tRNA(Thr) in a two-step reaction: L-threonine is first activated by ATP to form Thr-AMP and then transferred to the acceptor end of tRNA(Thr). Also edits incorrectly charged L-seryl-tRNA(Thr). The sequence is that of Threonine--tRNA ligase from Brucella canis (strain ATCC 23365 / NCTC 10854 / RM-666).